A 623-amino-acid chain; its full sequence is Chaperone protein HtpG (623 aa).

Residues 1–341 form an a; substrate-binding region; that stretch reads MEKREFKAES…SQDLSLNISR (341 aa). Residues 342 to 549 are b; it reads EMLQHDRQLS…EGEVSIEMEK (208 aa). A c region spans residues 550–623; sequence ILSAMPNNQG…FTNDICKLMK (74 aa).

It belongs to the heat shock protein 90 family. Homodimer.

The protein localises to the cytoplasm. Functionally, molecular chaperone. Has ATPase activity. This chain is Chaperone protein HtpG, found in Clostridium perfringens (strain 13 / Type A).